Consider the following 282-residue polypeptide: Adenosylcobinamide-GDP ribazoletransferase (282 aa).

Helical transmembrane passes span 47 to 67, 72 to 92, 124 to 144, 167 to 187, 208 to 228, and 231 to 251; these read GVGI…QALL, FTPL…TGGF, AFGA…LAML, AALL…IWLL, GSLL…GLAL, and ISLI…GALF.

It belongs to the CobS family. The cofactor is Mg(2+).

The protein resides in the cell inner membrane. It catalyses the reaction alpha-ribazole + adenosylcob(III)inamide-GDP = adenosylcob(III)alamin + GMP + H(+). It carries out the reaction alpha-ribazole 5'-phosphate + adenosylcob(III)inamide-GDP = adenosylcob(III)alamin 5'-phosphate + GMP + H(+). It functions in the pathway cofactor biosynthesis; adenosylcobalamin biosynthesis; adenosylcobalamin from cob(II)yrinate a,c-diamide: step 7/7. Its function is as follows. Joins adenosylcobinamide-GDP and alpha-ribazole to generate adenosylcobalamin (Ado-cobalamin). Also synthesizes adenosylcobalamin 5'-phosphate from adenosylcobinamide-GDP and alpha-ribazole 5'-phosphate. In Polaromonas sp. (strain JS666 / ATCC BAA-500), this protein is Adenosylcobinamide-GDP ribazoletransferase.